The sequence spans 558 residues: Potassium-transporting ATPase potassium-binding subunit (558 aa).

The next 12 membrane-spanning stretches (helical) occupy residues 1 to 21 (MEII…SGYL), 66 to 86 (FNGF…WLFL), 127 to 147 (MIVM…VCIA), 166 to 186 (IVRF…ILLM), 245 to 265 (IWSN…MLFL), 281 to 301 (ALIL…LTMW), 327 to 347 (FGAG…TGSV), 354 to 374 (LTPI…VFGG), 377 to 397 (VGLM…SLMV), 416 to 436 (IVLV…LAFM), 482 to 502 (ISTG…QLMI), and 531 to 551 (IVFI…LGPI).

The protein belongs to the KdpA family. In terms of assembly, the system is composed of three essential subunits: KdpA, KdpB and KdpC.

Its subcellular location is the cell membrane. Its function is as follows. Part of the high-affinity ATP-driven potassium transport (or Kdp) system, which catalyzes the hydrolysis of ATP coupled with the electrogenic transport of potassium into the cytoplasm. This subunit binds the extracellular potassium ions and delivers the ions to the membrane domain of KdpB through an intramembrane tunnel. In Staphylococcus aureus (strain USA300), this protein is Potassium-transporting ATPase potassium-binding subunit.